Here is a 435-residue protein sequence, read N- to C-terminus: MSVPPFTIRPAAPRLDGPTGPVAVAPGVHWVGALDPGLRNFDVILKTANGTTYNAYAVRGSEGVAVIDTVKAEFAGDFFARLEAVARYDEIRLIVLNHLEPDHTGAVPELLRRAPQAQVRLSPRGLPMLRALLKDDFERYDIKGVTTGQSVSLGDRDLQFFTTPFVHWPDTQCTWLAAERVLFTCDLFGSHYCDGRLFNDLVGDFRFSFEYYFDRIMRPFRSFVAQALDLIEPLDFGIIAPAHGPILRSHPRDYLTHTRRLISSRLAAETGSEKTLLIFYVSAYGATAQLAQAIHDGAAESPDVRVSLFDLEGGEITPFLDLIEEADGIALGTPTINGDAVRTIWEMLAALVDIETRGKLGAAFGSYGWSGEAVRLVETRLQGLKMRLPEPGLRVKLHPSAAELEEGRAFGRRLADHLTGRAAPREVDFAEIAAR.

The interval 48–228 (ANGTTYNAYA…PFRSFVAQAL (181 aa)) is zinc metallo-hydrolase. Positions 98, 100, 102, 167, 186, and 243 each coordinate Fe cation. A Flavodoxin-like domain is found at 276–415 (LLIFYVSAYG…EGRAFGRRLA (140 aa)).

In the N-terminal section; belongs to the zinc metallo-hydrolase group 3 family. Homodimer. FMN serves as cofactor. Requires Fe cation as cofactor.

In terms of biological role, low-potential electron donor to a number of redox enzymes. The sequence is that of Type A flavoprotein fprA (fprA) from Rhodobacter capsulatus (strain ATCC BAA-309 / NBRC 16581 / SB1003).